We begin with the raw amino-acid sequence, 91 residues long: Large ribosomal subunit protein uL23c (91 aa).

This sequence belongs to the universal ribosomal protein uL23 family. Part of the 50S ribosomal subunit.

The protein resides in the plastid. It is found in the chloroplast. Functionally, binds to 23S rRNA. The polypeptide is Large ribosomal subunit protein uL23c (rpl23) (Picea abies (Norway spruce)).